The following is a 95-amino-acid chain: uncharacterized protein (95 aa).

This is an uncharacterized protein from Homo sapiens (Human).